The primary structure comprises 426 residues: MTKSVEGLVSVVLGAQWGDEGKGKLVDLLSESCSVVCRCQGGNNAGHTVVAGGQEYFFHLLPSGIVNPNVLAVIGNGVVVNLQALFQEIDEAVCKGLLDVSSRLRISDRCHLVFDIHQEIDRMEEELRGENSLGTTKKGIGPTYSSKVTRNGLRVCDLMGDWVQFTAKYKELVKYVKRRYPKLGINVEESLEKLSGMVCDSVILINKLVKSKQANILVEGAQSCMLDIDFGTYPHVTSSNCSVGGVCTGLGLSPSRVGRVYGVIKAYTTRVGSGPFPSELLDGIGEFIQKKGCEWGVTTKRKRRIGWLDTVVIRYAHIINDFNALALTKIDVLDDLEEVKIAKAYIDPETGRELDSFPSDSSVLNHVVVVYETLPGWKTSTHGCRVYEELPTAAKVFVETVEKLLNIPIRWIGTGASRDSIIIRSV.

Residues 18–24 (GDEGKGK) and 46–48 (GHT) contribute to the GTP site. Catalysis depends on D19, which acts as the Proton acceptor. The Mg(2+) site is built by D19 and G46. IMP contacts are provided by residues 19–22 (DEGK), 44–47 (NAGH), T136, R150, Q222, T237, and R301. H47 functions as the Proton donor in the catalytic mechanism. A substrate-binding site is contributed by 297-303 (VTTKRKR). Residues R303, 329-331 (KID), and 413-415 (GTG) contribute to the GTP site.

It belongs to the adenylosuccinate synthetase family. Homodimer. The cofactor is Mg(2+).

It is found in the cytoplasm. The enzyme catalyses IMP + L-aspartate + GTP = N(6)-(1,2-dicarboxyethyl)-AMP + GDP + phosphate + 2 H(+). The protein operates within purine metabolism; AMP biosynthesis via de novo pathway; AMP from IMP: step 1/2. In terms of biological role, plays an important role in the de novo pathway and in the salvage pathway of purine nucleotide biosynthesis. Catalyzes the first committed step in the biosynthesis of AMP from IMP. This chain is Adenylosuccinate synthetase, found in Schistosoma mansoni (Blood fluke).